The sequence spans 100 residues: Urease subunit gamma (100 aa).

It belongs to the urease gamma subunit family. In terms of assembly, heterotrimer of UreA (gamma), UreB (beta) and UreC (alpha) subunits. Three heterotrimers associate to form the active enzyme.

Its subcellular location is the cytoplasm. The enzyme catalyses urea + 2 H2O + H(+) = hydrogencarbonate + 2 NH4(+). It functions in the pathway nitrogen metabolism; urea degradation; CO(2) and NH(3) from urea (urease route): step 1/1. The sequence is that of Urease subunit gamma from Cereibacter sphaeroides (strain ATCC 17025 / ATH 2.4.3) (Rhodobacter sphaeroides).